Consider the following 274-residue polypeptide: NAD kinase (274 aa).

The Proton acceptor role is filled by D59. NAD(+)-binding positions include 59–60 (DG), K64, 128–129 (ND), D158, 169–174 (TAYALS), and A193.

This sequence belongs to the NAD kinase family. A divalent metal cation is required as a cofactor.

The protein localises to the cytoplasm. The enzyme catalyses NAD(+) + ATP = ADP + NADP(+) + H(+). Functionally, involved in the regulation of the intracellular balance of NAD and NADP, and is a key enzyme in the biosynthesis of NADP. Catalyzes specifically the phosphorylation on 2'-hydroxyl of the adenosine moiety of NAD to yield NADP. The chain is NAD kinase from Petrotoga mobilis (strain DSM 10674 / SJ95).